A 1804-amino-acid polypeptide reads, in one-letter code: Collagen alpha-1(XI) chain (1804 aa).

A signal peptide spans 1–34 (MEPWSRWKTKRWIWDLTISTLALTFLFQAREVRG). A propeptide spans 35-511 (AAPVDILKAL…SKGPTISAQE (477 aa)) (N-terminal propeptide). Intrachain disulfides connect C60–C242 and C181–C235. Residues 70 to 242 (DVAYRVTEEA…DYCDHYSPDC (173 aa)) enclose the Laminin G-like domain. Residues 229-417 (KAAYDYCDHY…DFTETSINGH (189 aa)) are nonhelical region. Positions 315–329 (YQTETPRRVSGSNEP) are enriched in polar residues. Disordered stretches follow at residues 315–334 (YQTETPRRVSGSNEPNPVEE) and 433–506 (EPGM…KGPT). The tract at residues 418-506 (GAYGEKGQKG…YGGDGSKGPT (89 aa)) is triple-helical region (interrupted). The region spanning 440 to 488 (GPPGPAGPAGLMGPPGLQGPSGLPGDPGDRGPPGRPGLPGADGLPGPPG) is the Collagen-like 1 domain. Low complexity-rich tracts occupy residues 447–465 (PAGLMGPPGLQGPSGLPGD) and 477–494 (LPGADGLPGPPGTMLMLP). The tract at residues 507–509 (ISA) is short nonhelical segment. A telopeptide region spans residues 510–527 (QEAQAQAILQQARIALRG). The tract at residues 526–1567 (RGPPGPMGLT…SIQGDAGDNI (1042 aa)) is disordered. Collagen-like domains lie at 527-584 (GPPG…GADG) and 567-623 (PPGP…GPPG). The tract at residues 528 to 1540 (PPGPMGLTGR…PGPPGPPGEV (1013 aa)) is triple-helical region. Composition is skewed to gly residues over residues 539–548 (GPVGGPGSAG) and 581–590 (GADGGRGMPG). K610 carries the allysine modification. Low complexity predominate over residues 639-655 (PRGLPGEAGPRGLLGPR). The span at 697 to 708 (QGLPGPQGPIGP) shows a compositional bias: pro residues. Residues 715 to 726 (QGKPGLAGLPGA) are compositionally biased toward low complexity. A Collagen-like 4 domain is found at 728-781 (GPPGHPGKEGQSGEKGALGPPGPQGPIGYPGPRGVKGADGVRGLKGSKGEKGED). The segment covering 805 to 814 (RGEDGPEGPK) has biased composition (basic and acidic residues). Low complexity-rich tracts occupy residues 873 to 901 (KPGPRGQRGPTGPRGSRGARGPTGKPGPK), 916 to 925 (RGPQGPQGPV), and 969 to 979 (PQGPTGETGPI). Residues 1040–1049 (GLKGGEGPQG) are compositionally biased toward gly residues. Residues 1074–1083 (RPGPQGPPGP) show a composition bias toward pro residues. Residues 1084-1108 (AGEKGAPGEKGPQGPAGRDGVQGPV) show a composition bias toward low complexity. A compositionally biased stretch (gly residues) spans 1160–1169 (GIAGGDGEPG). Residues 1216–1227 (MGPPGPPGPRGP) are compositionally biased toward pro residues. 2 stretches are compositionally biased toward low complexity: residues 1240 to 1249 (PGSIGSVGVV) and 1282 to 1296 (AGPPGAAGPAGIKGP). Positions 1341–1360 (QPGPPGPSGEAGPPGPPGKR) are enriched in pro residues. 2 stretches are compositionally biased toward low complexity: residues 1383-1392 (AEGPPGKTGP) and 1417-1426 (QGLPGAAGQD). Collagen-like domains lie at 1427–1482 (GPPG…SPGA) and 1481–1539 (GAKG…PPGE). Residues 1428 to 1437 (PPGPLGPPGL) show a composition bias toward pro residues. K1450 bears the Allysine mark. A compositionally biased stretch (low complexity) spans 1453–1462 (PGLIGLIGPP). The segment covering 1481-1490 (GAKGDGGIPG) has biased composition (gly residues). A compositionally biased stretch (pro residues) spans 1491–1507 (PAGPIGPPGPPGLPGPA). Low complexity predominate over residues 1509–1519 (PKGNKGSSGPT). The span at 1528–1537 (PGPPGPPGPP) shows a compositional bias: pro residues. Residues 1541–1561 (IQPLPILSPKKTRRHTESIQG) are nonhelical region (C-terminal). Positions 1562 to 1804 (DAGDNILDYS…FEVGPACFLG (243 aa)) are cleaved as a propeptide — C-terminal propeptide. The Fibrillar collagen NC1 domain maps to 1575-1803 (EEIFGSLNSL…GFEVGPACFL (229 aa)). Cysteines 1605 and 1637 form a disulfide. Positions 1623, 1625, 1626, 1628, and 1631 each coordinate Ca(2+). N1638 is a glycosylation site (N-linked (GlcNAc...) asparagine). 2 cysteine pairs are disulfide-bonded: C1646/C1801 and C1712/C1755.

This sequence belongs to the fibrillar collagen family. Trimers composed of three different chains: alpha 1(XI), alpha 2(XI), and alpha 3(XI). Alpha 3(XI) is a post-translational modification of alpha 1(II). Alpha 1(V) can also be found instead of alpha 3(XI)=1(II). Post-translationally, prolines at the third position of the tripeptide repeating unit (G-X-Y) are hydroxylated in some or all of the chains. N-glycosylated.

It is found in the secreted. The protein resides in the extracellular space. It localises to the extracellular matrix. May play an important role in fibrillogenesis by controlling lateral growth of collagen II fibrils. This is Collagen alpha-1(XI) chain (Col11a1) from Mus musculus (Mouse).